Here is a 212-residue protein sequence, read N- to C-terminus: MATIFRTWSYQYPWVYALVSRLATLNVGGEERFHQLPLENLAISPGQKVLDLCCGGGQATVYLAQSGATVVGLDASPKALGRAKINVPQATYVQGLAEDLPFGEGEFDLVHTSVALHEMTPAQLQSIISGVHRVLKPGGIFALVDLHRPSNWLFWPPLAIFMGLFETETAWQLINTDLGSLLDQAGFTVVRKHLYAGGSLQVIQARANKTVN.

It belongs to the methyltransferase superfamily.

This is an uncharacterized protein from Synechocystis sp. (strain ATCC 27184 / PCC 6803 / Kazusa).